Consider the following 140-residue polypeptide: Large ribosomal subunit protein uL14 (140 aa).

Belongs to the universal ribosomal protein uL14 family. As to quaternary structure, component of the large ribosomal subunit.

The protein localises to the cytoplasm. Functionally, component of the large ribosomal subunit. The ribosome is a large ribonucleoprotein complex responsible for the synthesis of proteins in the cell. The polypeptide is Large ribosomal subunit protein uL14 (rpl23) (Danio rerio (Zebrafish)).